A 341-amino-acid chain; its full sequence is N-acetyl-gamma-glutamyl-phosphate reductase (341 aa).

Cys146 is an active-site residue.

It belongs to the NAGSA dehydrogenase family. Type 1 subfamily.

It localises to the cytoplasm. The enzyme catalyses N-acetyl-L-glutamate 5-semialdehyde + phosphate + NADP(+) = N-acetyl-L-glutamyl 5-phosphate + NADPH + H(+). It participates in amino-acid biosynthesis; L-arginine biosynthesis; N(2)-acetyl-L-ornithine from L-glutamate: step 3/4. Its function is as follows. Catalyzes the NADPH-dependent reduction of N-acetyl-5-glutamyl phosphate to yield N-acetyl-L-glutamate 5-semialdehyde. This is N-acetyl-gamma-glutamyl-phosphate reductase from Limosilactobacillus fermentum (strain NBRC 3956 / LMG 18251) (Lactobacillus fermentum).